Reading from the N-terminus, the 105-residue chain is BLOC-1-related complex subunit 7 (105 aa).

The protein belongs to the BORCS7 family. As to quaternary structure, component of the BLOC-one-related complex (BORC) which is composed of BLOC1S1, BLOC1S2, BORCS5, BORCS6, BORCS7, BORCS8, KXD1 and SNAPIN.

The protein resides in the lysosome membrane. As part of the BORC complex may play a role in lysosomes movement and localization at the cell periphery. Associated with the cytosolic face of lysosomes, the BORC complex may recruit ARL8B and couple lysosomes to microtubule plus-end-directed kinesin motor. In Bos taurus (Bovine), this protein is BLOC-1-related complex subunit 7.